The sequence spans 394 residues: MILPARTPETSLLRVLFLGLSTLAAFSLAQMELHVPPGLNKLEAVEGEEVVLPAWYTMAREESSSHPWEAPFLIWFLEQEGKEPKQVLSYFKGSLSNKPGVTLVHSISTRNVSLRLDALQEGDSGTYRCSVNAYDSDGKNIGHSIKTIELKVLVPPAPPSCSFQGVPYVGTNVTLNCKSPRSKPTAQYQWERLAPSSQVFFGPALDTVRGSLKLTNISTAMSGVYVCKAQNRVGFAQCNVTLDVMTGSKAAVVAGAVVGTFVGLVLIAGLVLLYQRRSKTLEELANDIKEDAIAPRTLPWTKGSDTISKNGTLSSVTSARALRPPKAAPPRPGTFTPTPSVSSQALSSPRLPRTDGPPPQAVSLTPGGVSSSTLNRMGAVPVMVPAQSQAGSLV.

The N-terminal stretch at methionine 1–alanine 29 is a signal peptide. At glutamine 30–alanine 251 the chain is on the extracellular side. The 110-residue stretch at proline 37 to lysine 146 folds into the Ig-like V-type domain. N-linked (GlcNAc...) asparagine glycosylation is found at asparagine 111, asparagine 172, asparagine 216, and asparagine 239. Residues proline 156 to aspartate 243 form the Ig-like C2-type domain. Cysteines 177 and 227 form a disulfide. The chain crosses the membrane as a helical span at residues valine 252–leucine 272. Residues leucine 273–valine 394 are Cytoplasmic-facing. The tract at residues tryptophan 300 to serine 372 is disordered. 2 stretches are compositionally biased toward polar residues: residues glycine 303–serine 318 and phenylalanine 335–serine 347. Residue serine 304 is modified to Phosphoserine. Phosphothreonine occurs at positions 336 and 338. Serine 340, serine 343, and serine 348 each carry phosphoserine.

As to quaternary structure, interacts with MAGI1.

Its subcellular location is the cell junction. It is found in the adherens junction. The protein localises to the tight junction. It localises to the cell membrane. Its function is as follows. Can mediate aggregation most likely through a homophilic molecular interaction. The polypeptide is Endothelial cell-selective adhesion molecule (Esam) (Rattus norvegicus (Rat)).